The primary structure comprises 163 residues: Putative pre-16S rRNA nuclease (163 aa).

The protein belongs to the YqgF nuclease family.

It is found in the cytoplasm. Functionally, could be a nuclease involved in processing of the 5'-end of pre-16S rRNA. The sequence is that of Putative pre-16S rRNA nuclease from Rhizobium leguminosarum bv. trifolii (strain WSM2304).